A 187-amino-acid chain; its full sequence is Protein GrpE (187 aa).

Residues 1–30 are disordered; that stretch reads MEKKETKNETEKTNKQDNKNTKSQKKENLN.

It belongs to the GrpE family. In terms of assembly, homodimer.

The protein localises to the cytoplasm. In terms of biological role, participates actively in the response to hyperosmotic and heat shock by preventing the aggregation of stress-denatured proteins, in association with DnaK and GrpE. It is the nucleotide exchange factor for DnaK and may function as a thermosensor. Unfolded proteins bind initially to DnaJ; upon interaction with the DnaJ-bound protein, DnaK hydrolyzes its bound ATP, resulting in the formation of a stable complex. GrpE releases ADP from DnaK; ATP binding to DnaK triggers the release of the substrate protein, thus completing the reaction cycle. Several rounds of ATP-dependent interactions between DnaJ, DnaK and GrpE are required for fully efficient folding. This chain is Protein GrpE, found in Borreliella afzelii (strain PKo) (Borrelia afzelii).